Here is a 697-residue protein sequence, read N- to C-terminus: Transmembrane protein 168 (697 aa).

Helical transmembrane passes span 36 to 56, 63 to 83, and 89 to 109; these read LGYL…YVRW, LILV…ILYY, and AASL…LCFL. Asn-111 is a glycosylation site (N-linked (GlcNAc...) asparagine). The next 7 helical transmembrane spans lie at 172-192, 199-219, 223-243, 265-285, 293-313, 352-372, and 380-400; these read MLVE…MLII, FLAI…SLET, PIAF…DIYF, LSVV…AFKL, FVIP…IIFL, FCLI…ILGA, and GIFL…HGLF. N-linked (GlcNAc...) asparagine glycosylation is found at Asn-533 and Asn-598. Residues 646 to 666 traverse the membrane as a helical segment; that stretch reads ITYPLVHLANWLCGLNLFWIC.

This sequence belongs to the TMEM168 family.

It is found in the nucleus membrane. In terms of biological role, plays a key role in maintaining the cardiac electrical stability by modulating cell surface expression of SCN5A. May play a role in the modulation of anxiety behavior by regulating GABAergic neuronal system in the nucleus accumbens. This chain is Transmembrane protein 168, found in Homo sapiens (Human).